The sequence spans 345 residues: MSDTTTLTIEALFQRVESIFLRAGLNAVQSGALARVITAGERDACKSHGIYRIEGALRTVKAAKVKPDAIPEVAEDDGTAIVKVNAMGGFANPAFELGLPALAERAKRLGLAALVINDCTHFSALWPEVEGLTSNGLAGLVMCPSYSTVAPTGGTKPLLGTNPFAFGWPRKDTSPYVFDFATSVAARGEIELHRRARKSLPEGWAVDADGNPTTDPEAALAGAMLPFGGHKGSAIGTMIELLAGIMIGDLTSPEVLDYLGTTTLAPFHGELIVAFSPEAFAKGRPGDPFQRAEVLFEAIIGQGARLPSGRRFAARAKSESEGITLTAAEMAGLDRLLEKGLDAVS.

S47 (charge relay system) is an active-site residue. H48 acts as the Proton donor in catalysis. Substrate is bound at residue R52. 121 to 125 (HFSAL) serves as a coordination point for NADP(+). T161 lines the substrate pocket. 179–181 (DFA) provides a ligand contact to NADP(+). Residue 187 to 188 (RG) participates in substrate binding. E189 functions as the Charge relay system in the catalytic mechanism. Residues 230-231 (HK) and 305-311 (RLPSGRR) each bind NADP(+).

This sequence belongs to the LDH2/MDH2 oxidoreductase family. Homodimer.

It catalyses the reaction L-proline + NAD(+) = 1-pyrroline-2-carboxylate + NADH + H(+). The enzyme catalyses L-proline + NADP(+) = 1-pyrroline-2-carboxylate + NADPH + H(+). In terms of biological role, catalyzes the reduction of Delta(1)-pyrroline-2-carboxylate (Pyr2C) to L-proline, using NADPH as the electron donor. Is likely involved in a degradation pathway that converts trans-3-hydroxy-L-proline (t3LHyp) to L-proline, which would allow A.tumefaciens to grow on t3LHyp as a sole carbon source. In Agrobacterium fabrum (strain C58 / ATCC 33970) (Agrobacterium tumefaciens (strain C58)), this protein is Delta(1)-pyrroline-2-carboxylate reductase.